The sequence spans 362 residues: tRNA-specific 2-thiouridylase MnmA (362 aa).

Residues 13–20 (GLSGGVDS) and Met39 each bind ATP. Residues 99-101 (NPD) are interaction with target base in tRNA. Cys104 serves as the catalytic Nucleophile. Cys104 and Cys200 are disulfide-bonded. Gly128 provides a ligand contact to ATP. The segment at 150 to 152 (KDQ) is interaction with tRNA. Residue Cys200 is the Cysteine persulfide intermediate of the active site.

Belongs to the MnmA/TRMU family.

The protein resides in the cytoplasm. It carries out the reaction S-sulfanyl-L-cysteinyl-[protein] + uridine(34) in tRNA + AH2 + ATP = 2-thiouridine(34) in tRNA + L-cysteinyl-[protein] + A + AMP + diphosphate + H(+). Catalyzes the 2-thiolation of uridine at the wobble position (U34) of tRNA, leading to the formation of s(2)U34. This is tRNA-specific 2-thiouridylase MnmA from Coxiella burnetii (strain Dugway 5J108-111).